Reading from the N-terminus, the 187-residue chain is Large ribosomal subunit protein eL18B (187 aa).

Threonine 134 carries the phosphothreonine modification. The residue at position 136 (serine 136) is a Phosphoserine.

The protein belongs to the eukaryotic ribosomal protein eL18 family. In terms of assembly, component of the large ribosomal subunit (LSU). Mature yeast ribosomes consist of a small (40S) and a large (60S) subunit. The 40S small subunit contains 1 molecule of ribosomal RNA (18S rRNA) and at least 33 different proteins. The large 60S subunit contains 3 rRNA molecules (25S, 5.8S and 5S rRNA) and at least 46 different proteins. eL18 interacts with NAP1.

The protein resides in the cytoplasm. In terms of biological role, component of the ribosome, a large ribonucleoprotein complex responsible for the synthesis of proteins in the cell. The small ribosomal subunit (SSU) binds messenger RNAs (mRNAs) and translates the encoded message by selecting cognate aminoacyl-transfer RNA (tRNA) molecules. The large subunit (LSU) contains the ribosomal catalytic site termed the peptidyl transferase center (PTC), which catalyzes the formation of peptide bonds, thereby polymerizing the amino acids delivered by tRNAs into a polypeptide chain. The nascent polypeptides leave the ribosome through a tunnel in the LSU and interact with protein factors that function in enzymatic processing, targeting, and the membrane insertion of nascent chains at the exit of the ribosomal tunnel. This is Large ribosomal subunit protein eL18B (rpl1802) from Schizosaccharomyces pombe (strain 972 / ATCC 24843) (Fission yeast).